Here is a 404-residue protein sequence, read N- to C-terminus: Corticosteroid-binding globulin (404 aa).

Residues Met1 to Ala22 form the signal peptide. N-linked (GlcNAc...) asparagine glycosylation is found at Asn95, Asn119, and Asn175. Gln253 is a binding site for cortisol. N-linked (GlcNAc...) asparagine glycosylation is present at Asn259. Cortisol is bound at residue Gln285. Asn326 is a glycosylation site (N-linked (GlcNAc...) asparagine). A cortisol-binding site is contributed by Trp392.

Belongs to the serpin family. In terms of processing, glycosylation in position Asn-259 is needed for steroid binding.

The protein resides in the secreted. Functionally, major transport protein for glucocorticoids and progestins in the blood of almost all vertebrate species. This is Corticosteroid-binding globulin (SERPINA6) from Bos taurus (Bovine).